A 376-amino-acid polypeptide reads, in one-letter code: Sulfate/thiosulfate import ATP-binding protein CysA 1 (376 aa).

The ABC transporter domain maps to Ile3 to Leu237. Gly35–Thr42 provides a ligand contact to ATP.

This sequence belongs to the ABC transporter superfamily. Sulfate/tungstate importer (TC 3.A.1.6) family. As to quaternary structure, the complex is composed of two ATP-binding proteins (CysA), two transmembrane proteins (CysT and CysW) and a solute-binding protein (CysP).

It localises to the cell inner membrane. It catalyses the reaction sulfate(out) + ATP + H2O = sulfate(in) + ADP + phosphate + H(+). The catalysed reaction is thiosulfate(out) + ATP + H2O = thiosulfate(in) + ADP + phosphate + H(+). Its function is as follows. Part of the ABC transporter complex CysAWTP involved in sulfate/thiosulfate import. Responsible for energy coupling to the transport system. The chain is Sulfate/thiosulfate import ATP-binding protein CysA 1 from Shewanella oneidensis (strain ATCC 700550 / JCM 31522 / CIP 106686 / LMG 19005 / NCIMB 14063 / MR-1).